The chain runs to 233 residues: Large ribosomal subunit protein uL1 (233 aa).

This sequence belongs to the universal ribosomal protein uL1 family. As to quaternary structure, part of the 50S ribosomal subunit.

Functionally, binds directly to 23S rRNA. The L1 stalk is quite mobile in the ribosome, and is involved in E site tRNA release. In terms of biological role, protein L1 is also a translational repressor protein, it controls the translation of the L11 operon by binding to its mRNA. This is Large ribosomal subunit protein uL1 from Hamiltonella defensa subsp. Acyrthosiphon pisum (strain 5AT).